The chain runs to 156 residues: ATP synthase subunit b (156 aa).

A helical transmembrane segment spans residues leucine 7–proline 27.

The protein belongs to the ATPase B chain family. In terms of assembly, F-type ATPases have 2 components, F(1) - the catalytic core - and F(0) - the membrane proton channel. F(1) has five subunits: alpha(3), beta(3), gamma(1), delta(1), epsilon(1). F(0) has three main subunits: a(1), b(2) and c(10-14). The alpha and beta chains form an alternating ring which encloses part of the gamma chain. F(1) is attached to F(0) by a central stalk formed by the gamma and epsilon chains, while a peripheral stalk is formed by the delta and b chains.

The protein localises to the cell inner membrane. Its function is as follows. F(1)F(0) ATP synthase produces ATP from ADP in the presence of a proton or sodium gradient. F-type ATPases consist of two structural domains, F(1) containing the extramembraneous catalytic core and F(0) containing the membrane proton channel, linked together by a central stalk and a peripheral stalk. During catalysis, ATP synthesis in the catalytic domain of F(1) is coupled via a rotary mechanism of the central stalk subunits to proton translocation. Functionally, component of the F(0) channel, it forms part of the peripheral stalk, linking F(1) to F(0). This chain is ATP synthase subunit b, found in Herminiimonas arsenicoxydans.